Here is a 571-residue protein sequence, read N- to C-terminus: Zinc finger protein 181 (571 aa).

Residues 4-76 (VTFNDVAIDF…EKKLSKGMIP (73 aa)) enclose the KRAB domain. Residues Lys-109 and Lys-126 each participate in a glycyl lysine isopeptide (Lys-Gly) (interchain with G-Cter in SUMO2) cross-link. C2H2-type zinc fingers lie at residues 237-259 (YTCS…WRIH), 265-287 (YECR…LISH), 293-315 (YKCI…QSTH), 321-343 (YECM…LRIH), 349-371 (YECR…QKIH), 377-399 (YECR…QRIH), 405-427 (YECN…QSIH), 433-455 (FECQ…LRNH), 461-483 (YECS…HRIH), 489-511 (YECI…QRIH), and 517-539 (YKCN…QRVH).

The protein belongs to the krueppel C2H2-type zinc-finger protein family.

Its subcellular location is the nucleus. Its function is as follows. May be involved in transcriptional regulation. The chain is Zinc finger protein 181 (ZNF181) from Homo sapiens (Human).